A 248-amino-acid chain; its full sequence is Segregation and condensation protein A (248 aa).

Belongs to the ScpA family. As to quaternary structure, component of a cohesin-like complex composed of ScpA, ScpB and the Smc homodimer, in which ScpA and ScpB bind to the head domain of Smc. The presence of the three proteins is required for the association of the complex with DNA.

Its subcellular location is the cytoplasm. Its function is as follows. Participates in chromosomal partition during cell division. May act via the formation of a condensin-like complex containing Smc and ScpB that pull DNA away from mid-cell into both cell halves. This Clostridium perfringens (strain ATCC 13124 / DSM 756 / JCM 1290 / NCIMB 6125 / NCTC 8237 / Type A) protein is Segregation and condensation protein A.